The chain runs to 222 residues: Ribosomal RNA small subunit methyltransferase G (222 aa).

Gly80, Leu85, and Arg149 together coordinate S-adenosyl-L-methionine.

Belongs to the methyltransferase superfamily. RNA methyltransferase RsmG family.

The protein localises to the cytoplasm. Specifically methylates the N7 position of a guanine in 16S rRNA. This chain is Ribosomal RNA small subunit methyltransferase G, found in Treponema pallidum (strain Nichols).